The chain runs to 284 residues: ATP synthase gamma chain (284 aa).

This sequence belongs to the ATPase gamma chain family. In terms of assembly, F-type ATPases have 2 components, CF(1) - the catalytic core - and CF(0) - the membrane proton channel. CF(1) has five subunits: alpha(3), beta(3), gamma(1), delta(1), epsilon(1). CF(0) has three main subunits: a, b and c.

The protein resides in the cell membrane. In terms of biological role, produces ATP from ADP in the presence of a proton gradient across the membrane. The gamma chain is believed to be important in regulating ATPase activity and the flow of protons through the CF(0) complex. This Pelotomaculum thermopropionicum (strain DSM 13744 / JCM 10971 / SI) protein is ATP synthase gamma chain.